The sequence spans 495 residues: Trimethylamine methyltransferase MttB1 (495 aa).

Residue Pyl334 is a non-standard amino acid, pyrrolysine.

The protein belongs to the trimethylamine methyltransferase family. Can form a complex with MttC.

The catalysed reaction is Co(I)-[trimethylamine-specific corrinoid protein] + trimethylamine + H(+) = methyl-Co(III)-[trimethylamine-specific corrinoid protein] + dimethylamine. Its pathway is one-carbon metabolism; methanogenesis from trimethylamine. Catalyzes the transfer of a methyl group from trimethylamine to the corrinoid cofactor of MttC. This Methanosarcina acetivorans (strain ATCC 35395 / DSM 2834 / JCM 12185 / C2A) protein is Trimethylamine methyltransferase MttB1 (mttB1).